The primary structure comprises 520 residues: Trichothecene O-acetyltransferase TRI3 (520 aa).

The disordered stretch occupies residues 1-23 (MGSKLPELPKLSPEKHRWEKSNV). Residues 12-23 (SPEKHRWEKSNV) are compositionally biased toward basic and acidic residues.

This sequence belongs to the trichothecene O-acetyltransferase family.

Its pathway is sesquiterpene biosynthesis; trichothecene biosynthesis. Its function is as follows. Trichothecene O-acetyltransferase; part of the gene cluster that mediates the production of the antimicrobial trichothecene harzianum A (HA) that plays a role in Botrytis cinerea antagonistic activity and plant defense priming. The biosynthesis of harzianum A begins with the cyclization of farnesyl diphosphate to trichodiene and is catalyzed by the trichodiene synthase TRI5. Trichodiene undergoes a series of oxygenations catalyzed by the cytochrome P450 monooxygenase TRI4. TRI4 controls the addition of 3 oxygens at C-2, C-11, and the C-12, C-13-epoxide to form the intermediate isotrichodiol. Isotrichodiol then undergoes a non-enzymatic isomerization and cyclization to form 12,13-epoxytrichothec-9-ene (EPT) which is further converted to trichodermol by the cytochrome P450 monooxygenase TRI11 via C-4 hydroxylation. The last step of HA synthesis is esterification of an octatriendioyl moiety to the C-4 oxygen of trichodermol. The octatriendioyl moiety is probably produced by the polyketide synthase TRI17 and the esterification performed by the trichothecene O-acetyltransferase TRI3. This chain is Trichothecene O-acetyltransferase TRI3, found in Trichoderma arundinaceum.